A 778-amino-acid chain; its full sequence is Zinc finger protein 749 (778 aa).

A KRAB domain is found at 8-101 (MVFEDVAIYF…ILKDILHLAE (94 aa)). The segment at 152–174 (FTCTQGGKDFTASSDLLQQQVLN) adopts a C2H2-type 1; degenerate zinc-finger fold. The C2H2-type 2; degenerate zinc-finger motif lies at 196–218 (FNSSQGGKDFCHQHGLFEHQKTH). The segment at 224 to 246 (YEFSECGELFRYNSNLIKYQQNH) adopts a C2H2-type 3; degenerate zinc-finger fold. Residues 252-274 (YEGTEYGKTFIRKSNLVQHQKIH) form a C2H2-type 4; degenerate zinc finger. C2H2-type zinc fingers lie at residues 298 to 320 (YECT…QKTH), 326 to 348 (YECN…QKVH), 354 to 376 (YECS…QRVH), 382 to 404 (FECS…QRVH), 410 to 432 (YKCS…LKIH), and 438 to 460 (YECT…QKIH). Lysine 466 carries the N6-acetyllysine modification. 2 consecutive C2H2-type zinc fingers follow at residues 483 to 505 (YTCS…QKIH) and 511 to 533 (YECT…EKIH). Lysine 539 carries the N6-acetyllysine modification. Residues 556-578 (YVCSECGKAFLTQAHLDGHQKIQ) form a C2H2-type 13; degenerate zinc finger. C2H2-type zinc fingers lie at residues 584–606 (YECN…QRIH), 612–634 (YKCS…QKVH), and 640–662 (YECS…QRVH). Residues 668–690 (YECSNCGKFLRYRSTFIKHHKVC) form a C2H2-type 17; atypical zinc finger. The C2H2-type 18 zinc finger occupies 696–718 (HECSKCRELFRTKSSLIIHQQSH). The C2H2-type 19; degenerate zinc-finger motif lies at 751 to 773 (YECGESSKVFKYNSSLIKHQIIH). Glycyl lysine isopeptide (Lys-Gly) (interchain with G-Cter in SUMO2) cross-links involve residues lysine 761 and lysine 768.

Belongs to the krueppel C2H2-type zinc-finger protein family.

The protein localises to the nucleus. Functionally, may be involved in transcriptional regulation. This Homo sapiens (Human) protein is Zinc finger protein 749 (ZNF749).